The following is a 317-amino-acid chain: Melanocyte-stimulating hormone receptor (317 aa).

Residues 1–37 are Extracellular-facing; that stretch reads MPVQGSQRRLLGSLNSTPTATPHLGLAANQTGARCLE. N-linked (GlcNAc...) asparagine glycosylation occurs at Asn-29. Residues 38-63 form a helical membrane-spanning segment; sequence VSIPDGLFLSLGLVSLVENVLVVTAI. Topologically, residues 64-72 are cytoplasmic; sequence AKNRNLHSP. Residues 73–93 form a helical membrane-spanning segment; the sequence is MYCFICCLALSDLLVSGSNML. Residues 94 to 118 lie on the Extracellular side of the membrane; that stretch reads ETAVILLLEAGALAARAAVVQQLDN. Residues 119 to 140 form a helical membrane-spanning segment; it reads VIDVITCSSMLASLCFLGAIAV. The Cytoplasmic segment spans residues 141-163; it reads DRYISIFYALRYHSIVTLPRARR. The helical transmembrane segment at 164–183 threads the bilayer; the sequence is AVAAIWVASVLFSMLFIAYY. The Extracellular portion of the chain corresponds to 184 to 191; it reads DHAAVLLC. Residues 192–211 traverse the membrane as a helical segment; the sequence is LVVFFLAMLVLMAVLYIHML. Residues 212 to 240 are Cytoplasmic-facing; the sequence is ARARQHAQGIARLHKRQCPAHQGFGLKGA. The helical transmembrane segment at 241-266 threads the bilayer; sequence ATLTILLGIFFLCWGPFFLHLTLIVL. Residues 267-279 lie on the Extracellular side of the membrane; the sequence is CPQHPTCSCIFKN. The chain crosses the membrane as a helical span at residues 280–300; it reads FNLFLALIICNAIIDPLIYAF. Over 301–317 the chain is Cytoplasmic; the sequence is RSQELRRTLKEVLLCSW. Cys-315 carries the S-palmitoyl cysteine lipid modification.

Belongs to the G-protein coupled receptor 1 family. Interacts with MGRN1, but does not undergo MGRN1-mediated ubiquitination; this interaction competes with GNAS-binding and thus inhibits agonist-induced cAMP production. Interacts with OPN3; the interaction results in a decrease in MC1R-mediated cAMP signaling and ultimately a decrease in melanin production in melanocytes.

It is found in the cell membrane. Functionally, receptor for MSH (alpha, beta and gamma) and ACTH. The activity of this receptor is mediated by G proteins which activate adenylate cyclase. Mediates melanogenesis, the production of eumelanin (black/brown) and phaeomelanin (red/yellow), via regulation of cAMP signaling in melanocytes. This Cercopithecus mitis (Blue monkey) protein is Melanocyte-stimulating hormone receptor (MC1R).